The following is a 217-amino-acid chain: T-complex protein 10A homolog 1 (217 aa).

Residues 1–26 (MLAGQLEARDPKEGTHPEDPCPGAGA) are disordered. Over residues 7-19 (EARDPKEGTHPED) the composition is skewed to basic and acidic residues. Positions 69–110 (ADVHGKLRSHIDALREQNMELREKLRALQLQRWKARKKSAAS) form a coiled coil. Residues 75–96 (LRSHIDALREQNMELREKLRAL) form a leucine-zipper region. Over residues 175–192 (ERISSWKTPPQEKRDKSL) the composition is skewed to basic and acidic residues. Residues 175 to 217 (ERISSWKTPPQEKRDKSLSRRRQDRRATPTGRPTPCAERRGGV) are disordered.

This sequence belongs to the TCP10 family. Self-associates (via leucine zipper). Interacts (via leucine zipper) with ZIPK/DAPK3 (via leucine zipper). Interacts with MAD4.

The protein resides in the nucleus. Its function is as follows. May be involved in transcriptional regulation. Has in vitro transcription inhibition activity. The sequence is that of T-complex protein 10A homolog 1 (TCP10L) from Pan troglodytes (Chimpanzee).